The chain runs to 412 residues: UV DNA damage endonuclease (412 aa).

It belongs to the uve1/UvsE family.

Functionally, component in a DNA repair pathway. Removal of UV LIGHT damaged nucleotides. Recognizes pyrimidine dimers and cleave a phosphodiester bond immediately 5' to the lesion. This is UV DNA damage endonuclease from Clostridium perfringens (strain 13 / Type A).